Reading from the N-terminus, the 353-residue chain is MTVVAPGSVVFRNICKQFGAFTAIPDLSLTIEPGTLVTLLGPSGCGKTTTLRMLAGLEHPTSGRILIGGKDVTMLPANERDVSMVFQSYALFPHMNALDNVAYGLESSGMRRKEARERAEEGLALVGLPGMGQRLPAELSGGQQQRVAVARALVLEPQVLLLDEPLSNLDARLRRRVRTEIRELQQRLGFTAVYVTHDQDEALAVSDRIIVMKDGNIAQEGPPRELYETPASAFIADFMGEANVVACDVIDVDGHEATIRVERLTHRVSGRGMRPGPAKLAVRPNAITLEPSAAGSFSGEITHTAYLGDHVEYEVKTAAGTLFVVDPAVERALAPQTNVAIAFKERGIALING.

The region spanning 9-239 (VVFRNICKQF…PASAFIADFM (231 aa)) is the ABC transporter domain. 41 to 48 (GPSGCGKT) contacts ATP.

Belongs to the ABC transporter superfamily. Fe(3+) ion importer (TC 3.A.1.10) family. As to quaternary structure, the complex is composed of two ATP-binding proteins (FbpC), two transmembrane proteins (FbpB) and a solute-binding protein (FbpA).

It localises to the cell inner membrane. It carries out the reaction Fe(3+)(out) + ATP + H2O = Fe(3+)(in) + ADP + phosphate + H(+). Part of the ABC transporter complex FbpABC involved in Fe(3+) ions import. Responsible for energy coupling to the transport system. The protein is Fe(3+) ions import ATP-binding protein FbpC 1 of Rhizobium meliloti (strain 1021) (Ensifer meliloti).